The chain runs to 518 residues: Glucose-1-phosphate adenylyltransferase large subunit 2, cytosolic (518 aa).

This sequence belongs to the bacterial/plant glucose-1-phosphate adenylyltransferase family. In terms of assembly, heterotetramer composed of two small and two large subunits.

Its subcellular location is the cytoplasm. The protein resides in the cytosol. The catalysed reaction is alpha-D-glucose 1-phosphate + ATP + H(+) = ADP-alpha-D-glucose + diphosphate. It participates in glycan biosynthesis; starch biosynthesis. Its activity is regulated as follows. Activated by 3'phosphoglycerate, inhibited by orthophosphate. Allosteric regulation. Inhibited by inorganic phosphate (Pi). In terms of biological role, involved in synthesis of starch. Catalyzes the synthesis of ADP-glucose, a molecule that serves as an activated glycosyl donor for alpha-1,4-glucan synthesis. Essential for starch synthesis in seed endosperm. Is essential for both catalytic and allosteric regulatory properties of the cytosolic heterotetramer enzyme. In Oryza sativa subsp. japonica (Rice), this protein is Glucose-1-phosphate adenylyltransferase large subunit 2, cytosolic.